The chain runs to 321 residues: Putative sulfotransferase vep-2 (321 aa).

Residues 11-31 traverse the membrane as a helical segment; it reads IARVLIIIASISVICITLFIS.

The protein to C.elegans C41C4.1 and C18B2.2.

It localises to the membrane. The chain is Putative sulfotransferase vep-2 from Caenorhabditis elegans.